A 140-amino-acid chain; its full sequence is Mediator of RNA polymerase II transcription subunit 21 (140 aa).

The stretch at 52 to 130 forms a coiled coil; the sequence is EERERTLEEL…CDELILKLAQ (79 aa).

This sequence belongs to the Mediator complex subunit 21 family. Component of the Mediator complex.

It is found in the nucleus. Its function is as follows. Component of the Mediator complex, a coactivator involved in the regulated transcription of nearly all RNA polymerase II-dependent genes. Mediator functions as a bridge to convey information from gene-specific regulatory proteins to the basal RNA polymerase II transcription machinery. Mediator is recruited to promoters by direct interactions with regulatory proteins and serves as a scaffold for the assembly of a functional preinitiation complex with RNA polymerase II and the general transcription factors. This is Mediator of RNA polymerase II transcription subunit 21 (SRB7) from Yarrowia lipolytica (strain CLIB 122 / E 150) (Yeast).